A 388-amino-acid chain; its full sequence is Putative membrane protein MJ1562 (388 aa).

6 consecutive transmembrane segments (helical) span residues 22–42 (FLML…ATNV), 219–239 (SQSF…IIYF), 246–266 (IMPL…MGLL), 273–293 (ATAG…IHLM), 320–340 (AVMA…LAPL), and 351–371 (ALGI…LIVI).

This sequence belongs to the resistance-nodulation-cell division (RND) (TC 2.A.6) family. MmpL subfamily.

Its subcellular location is the cell membrane. This is Putative membrane protein MJ1562 from Methanocaldococcus jannaschii (strain ATCC 43067 / DSM 2661 / JAL-1 / JCM 10045 / NBRC 100440) (Methanococcus jannaschii).